The primary structure comprises 341 residues: Outer membrane protein assembly factor BamD (341 aa).

Residues 1–17 (MQVKHLLLIAILALTAA) form the signal peptide. Cys18 carries N-palmitoyl cysteine lipidation. Cys18 is lipidated: S-diacylglycerol cysteine. The span at 289 to 316 (DVIKQYEDAEREIPAELKPENQDHSADD) shows a compositional bias: basic and acidic residues. The tract at residues 289-330 (DVIKQYEDAEREIPAELKPENQDHSADDEKPESDDDEDSGRS) is disordered. Residues 317–326 (EKPESDDDED) are compositionally biased toward acidic residues.

The protein belongs to the BamD family. As to quaternary structure, part of the Bam complex.

The protein localises to the cell outer membrane. Functionally, part of the outer membrane protein assembly complex, which is involved in assembly and insertion of beta-barrel proteins into the outer membrane. The sequence is that of Outer membrane protein assembly factor BamD from Pseudomonas aeruginosa (strain ATCC 15692 / DSM 22644 / CIP 104116 / JCM 14847 / LMG 12228 / 1C / PRS 101 / PAO1).